Consider the following 380-residue polypeptide: Acyl-coenzyme A diphosphatase SCS3 (380 aa).

At 1–7 (MSSKWFN) the chain is on the cytoplasmic side. A helical membrane pass occupies residues 8–28 (AIHLLVCPLTVLVGYLMNAYG). Topologically, residues 29–43 (YGAALQATLNKDGLV) are lumenal. The helical transmembrane segment at 44–64 (NAMLVKKGWFWTSLVGWWCII) threads the bilayer. At 65–88 (RYRAVPGATGRDRRHIVQSFKRYA) the chain is on the cytoplasmic side. The helical transmembrane segment at 89-109 (ILTVWWYVFTQGIWFGVGPIM) threads the bilayer. Over 110 to 233 (DLVFVYTGGH…GHWAGGHDPS (124 aa)) the chain is Lumenal. A helical membrane pass occupies residues 234–254 (GHVFLATLMCMFLLGELRVFG). The active site involves His-235. At 255-325 (RRALAHLYAQ…LTRCIACDHP (71 aa)) the chain is on the cytoplasmic side. Residues 326-346 (VIILLTLLVTWLWQLLLTAVA) traverse the membrane as a helical segment. Residues 347 to 356 (SRFHTVREHM) are Lumenal-facing. His-350 is an active-site residue. Residues 357–377 (SGLLAAYIVTGLVYARDAAAL) traverse the membrane as a helical segment. The Cytoplasmic segment spans residues 378 to 380 (RPV).

The protein belongs to the FIT family. Fungal FIT2B/SCS3 subfamily.

It localises to the endoplasmic reticulum membrane. It carries out the reaction an acyl-CoA + H2O = an acyl-4'-phosphopantetheine + adenosine 3',5'-bisphosphate + 2 H(+). The enzyme catalyses (9Z)-octadecenoyl-CoA + H2O = S-(9Z-octadecenoyl)-4'-phosphopantetheine + adenosine 3',5'-bisphosphate + 2 H(+). It catalyses the reaction (5Z,8Z,11Z,14Z)-eicosatetraenoyl-CoA + H2O = S-(5Z,8Z,11Z,14Z-eicosatetraenoyl)-4'-phosphopantetheine + adenosine 3',5'-bisphosphate + 2 H(+). The catalysed reaction is hexadecanoyl-CoA + H2O = S-hexadecanoyl-4'-phosphopantetheine + adenosine 3',5'-bisphosphate + 2 H(+). Its function is as follows. Fatty acyl-coenzyme A (CoA) diphosphatase that hydrolyzes fatty acyl-CoA to yield acyl-4'-phosphopantetheine and adenosine 3',5'-bisphosphate. Preferentially hydrolyzes unsaturated long-chain acyl-CoA substrates in the endoplasmic reticulum (ER) lumen. This catalytic activity is required for maintaining ER structure and for lipid droplets (LDs) biogenesis, which are lipid storage organelles involved in maintaining lipid and energy homeostasis. May directly bind to diacylglycerol (DAGs) and triacylglycerol, which is also important for LD biogenesis. May support directional budding of nacent LDs from the ER into the cytosol by reducing DAG levels at sites of LD formation. May play a role in the regulation of cell morphology and cytoskeletal organization. Involved in phospholipid biosynthesis. In Saccharomyces cerevisiae (strain ATCC 204508 / S288c) (Baker's yeast), this protein is Acyl-coenzyme A diphosphatase SCS3.